The primary structure comprises 373 residues: Chaperone protein DnaJ (373 aa).

The J domain maps to 5-70; sequence DYYEVLGVHR…QQRVIYDQYG (66 aa). Residues 136-214 form a CR-type zinc finger; that stretch reads GLETKIQIPR…CHGSGRVRGK (79 aa). Cys-149, Cys-152, Cys-166, Cys-169, Cys-188, Cys-191, Cys-202, and Cys-205 together coordinate Zn(2+). 4 CXXCXGXG motif repeats span residues 149 to 156, 166 to 173, 188 to 195, and 202 to 209; these read CGTCDGIG, CPTCQGAG, CPECNGEG, and CEECHGSG.

Belongs to the DnaJ family. As to quaternary structure, homodimer. Zn(2+) is required as a cofactor.

The protein resides in the cytoplasm. Participates actively in the response to hyperosmotic and heat shock by preventing the aggregation of stress-denatured proteins and by disaggregating proteins, also in an autonomous, DnaK-independent fashion. Unfolded proteins bind initially to DnaJ; upon interaction with the DnaJ-bound protein, DnaK hydrolyzes its bound ATP, resulting in the formation of a stable complex. GrpE releases ADP from DnaK; ATP binding to DnaK triggers the release of the substrate protein, thus completing the reaction cycle. Several rounds of ATP-dependent interactions between DnaJ, DnaK and GrpE are required for fully efficient folding. Also involved, together with DnaK and GrpE, in the DNA replication of plasmids through activation of initiation proteins. This is Chaperone protein DnaJ from Syntrophotalea carbinolica (strain DSM 2380 / NBRC 103641 / GraBd1) (Pelobacter carbinolicus).